Consider the following 215-residue polypeptide: MNIILFGPPGAGKGTQAKKMVDNYGIPQISTGDILRANVREGTELGLAAKEYMDKGELVPDEVLIGIIKNRLKEQDCEKGFILDGYPRTIPQADALAVILDEINKPIDVVLNLEVPDEELIERISGRLMCNCGASYHRTFNPPKKDDVCDICGGKVFQRADDKEEAVKNRLNVYKKQTEPLIDYYTKQGLLVTLDGTKDIDEVFEEIKAVLKKFA.

Residue G10 to T15 participates in ATP binding. Positions S30–V59 are NMP. AMP-binding positions include T31, R36, E57 to V59, G85 to R88, and Q92. Residues G126–D162 are LID. Residue R127 coordinates ATP. Zn(2+)-binding residues include C130 and C132. S135–Y136 contributes to the ATP binding site. 2 residues coordinate Zn(2+): C149 and C152. Residues R159 and R170 each contribute to the AMP site. Position 198 (K198) interacts with ATP.

This sequence belongs to the adenylate kinase family. As to quaternary structure, monomer.

It is found in the cytoplasm. It carries out the reaction AMP + ATP = 2 ADP. The protein operates within purine metabolism; AMP biosynthesis via salvage pathway; AMP from ADP: step 1/1. Catalyzes the reversible transfer of the terminal phosphate group between ATP and AMP. Plays an important role in cellular energy homeostasis and in adenine nucleotide metabolism. This is Adenylate kinase from Methanosarcina barkeri (strain Fusaro / DSM 804).